The primary structure comprises 350 residues: Methylthioribose-1-phosphate isomerase (350 aa).

Residues 47–49 (RGA), R89, and Q196 each bind substrate. D237 (proton donor) is an active-site residue. A substrate-binding site is contributed by 247-248 (NK).

Belongs to the eIF-2B alpha/beta/delta subunits family. MtnA subfamily.

It carries out the reaction 5-(methylsulfanyl)-alpha-D-ribose 1-phosphate = 5-(methylsulfanyl)-D-ribulose 1-phosphate. The protein operates within amino-acid biosynthesis; L-methionine biosynthesis via salvage pathway; L-methionine from S-methyl-5-thio-alpha-D-ribose 1-phosphate: step 1/6. Catalyzes the interconversion of methylthioribose-1-phosphate (MTR-1-P) into methylthioribulose-1-phosphate (MTRu-1-P). This is Methylthioribose-1-phosphate isomerase from Nitratidesulfovibrio vulgaris (strain DSM 19637 / Miyazaki F) (Desulfovibrio vulgaris).